Here is a 509-residue protein sequence, read N- to C-terminus: Dihydrolipoyl dehydrogenase, mitochondrial (509 aa).

The transit peptide at 1–35 directs the protein to the mitochondrion; the sequence is MQSWSRVYCSLAKRGHFSRISHGLQAVSAVPLRTY. Position 66 is an N6-acetyllysine; alternate (K66). K66 carries the post-translational modification N6-succinyllysine; alternate. FAD contacts are provided by residues 71–80 and K89; that span reads EKNETLGGTC. A disulfide bridge connects residues C80 and C85. N6-acetyllysine; alternate is present on residues K104, K122, K132, and K143. An N6-succinyllysine; alternate mark is found at K104, K122, K132, and K143. G154 contributes to the FAD binding site. Residues K159 and K166 each carry the N6-succinyllysine modification. An FAD-binding site is contributed by 183-185; sequence TGS. Residues 220-227 and E243 contribute to the NAD(+) site; that span reads GAGVIGVE. K273 and K277 each carry N6-succinyllysine. Position 278 (V278) interacts with NAD(+). Phosphoserine occurs at positions 285 and 297. Residue G314 coordinates NAD(+). K346 carries the post-translational modification N6-acetyllysine. FAD contacts are provided by residues D355 and 361–364; that span reads MLAH. K410 bears the N6-acetyllysine; alternate mark. An N6-succinyllysine; alternate modification is found at K410. N6-acetyllysine is present on residues K417 and K420. K430 is subject to N6-succinyllysine. H487 acts as the Proton acceptor in catalysis. A Phosphoserine modification is found at S502. The residue at position 505 (K505) is an N6-acetyllysine; alternate. K505 is modified (N6-succinyllysine; alternate).

The protein belongs to the class-I pyridine nucleotide-disulfide oxidoreductase family. As to quaternary structure, homodimer. Part of the multimeric pyruvate dehydrogenase complex that contains multiple copies of pyruvate dehydrogenase (subunits PDHA (PDHA1 or PDHA2) and PDHB, E1), dihydrolipoamide acetyltransferase (DLAT, E2) and lipoamide dehydrogenase (DLD, E3). These subunits are bound to an inner core composed of about 48 DLAT and 12 PDHX molecules (by non covalent bonds). The 2-oxoglutarate dehydrogenase complex is composed of OGDH (2-oxoglutarate dehydrogenase; E1), DLST (dihydrolipoamide succinyltransferase; E2), DLD (dihydrolipoamide dehydrogenase; E3) and the assembly factor KGD4. It contains multiple copies of the three enzymatic components (E1, E2 and E3). In the nucleus, the 2-oxoglutarate dehydrogenase complex associates with KAT2A. Interacts with PDHX. Requires FAD as cofactor. Tyrosine phosphorylated.

It localises to the mitochondrion matrix. Its subcellular location is the nucleus. The protein resides in the cell projection. The protein localises to the cilium. It is found in the flagellum. It localises to the cytoplasmic vesicle. Its subcellular location is the secretory vesicle. The protein resides in the acrosome. The catalysed reaction is N(6)-[(R)-dihydrolipoyl]-L-lysyl-[protein] + NAD(+) = N(6)-[(R)-lipoyl]-L-lysyl-[protein] + NADH + H(+). Functionally, lipoamide dehydrogenase is a component of the glycine cleavage system as well as an E3 component of three alpha-ketoacid dehydrogenase complexes (pyruvate-, alpha-ketoglutarate-, and branched-chain amino acid-dehydrogenase complex). The 2-oxoglutarate dehydrogenase complex is mainly active in the mitochondrion. A fraction of the 2-oxoglutarate dehydrogenase complex also localizes in the nucleus and is required for lysine succinylation of histones: associates with KAT2A on chromatin and provides succinyl-CoA to histone succinyltransferase KAT2A. In monomeric form may have additional moonlighting function as serine protease. Involved in the hyperactivation of spermatazoa during capacitation and in the spermatazoal acrosome reaction. The polypeptide is Dihydrolipoyl dehydrogenase, mitochondrial (DLD) (Canis lupus familiaris (Dog)).